Reading from the N-terminus, the 146-residue chain is Myoglobin (146 aa).

The 140-residue stretch at 2-141 folds into the Globin domain; the sequence is GDFDMVLKFW…IIADIDATYK (140 aa). His-60 provides a ligand contact to nitrite. His-60 provides a ligand contact to O2. His-89 provides a ligand contact to heme b.

It belongs to the globin family. As to quaternary structure, monomeric.

Its subcellular location is the cytoplasm. It is found in the sarcoplasm. It catalyses the reaction Fe(III)-heme b-[protein] + nitric oxide + H2O = Fe(II)-heme b-[protein] + nitrite + 2 H(+). The catalysed reaction is H2O2 + AH2 = A + 2 H2O. In terms of biological role, monomeric heme protein which primary function is to store oxygen and facilitate its diffusion within muscle tissues. Reversibly binds oxygen through a pentacoordinated heme iron and enables its timely and efficient release as needed during periods of heightened demand. Depending on the oxidative conditions of tissues and cells, and in addition to its ability to bind oxygen, it also has a nitrite reductase activity whereby it regulates the production of bioactive nitric oxide. Under stress conditions, like hypoxia and anoxia, it also protects cells against reactive oxygen species thanks to its pseudoperoxidase activity. The polypeptide is Myoglobin (mb) (Tetraodon nigroviridis (Spotted green pufferfish)).